The chain runs to 251 residues: Pyrroloquinoline-quinone synthase (251 aa).

It belongs to the PqqC family.

The catalysed reaction is 6-(2-amino-2-carboxyethyl)-7,8-dioxo-1,2,3,4,7,8-hexahydroquinoline-2,4-dicarboxylate + 3 O2 = pyrroloquinoline quinone + 2 H2O2 + 2 H2O + H(+). It functions in the pathway cofactor biosynthesis; pyrroloquinoline quinone biosynthesis. Its function is as follows. Ring cyclization and eight-electron oxidation of 3a-(2-amino-2-carboxyethyl)-4,5-dioxo-4,5,6,7,8,9-hexahydroquinoline-7,9-dicarboxylic-acid to PQQ. The protein is Pyrroloquinoline-quinone synthase of Pseudomonas savastanoi pv. phaseolicola (strain 1448A / Race 6) (Pseudomonas syringae pv. phaseolicola (strain 1448A / Race 6)).